Consider the following 189-residue polypeptide: Protein Rex (189 aa).

Residues 1-16 (MPKTRRRPRRSQRKRP) show a composition bias toward basic residues. The interval 1 to 27 (MPKTRRRPRRSQRKRPPTPWPTSQGLD) is disordered. A Nuclear localization signal, and RNA-binding (RxRE) motif is present at residues 2 to 18 (PKTRRRPRRSQRKRPPT). The interval 56–70 (RPAYIVTPYWPPVQS) is homomultimerization. Phosphoserine; by host is present on serine 70. Residues 73–189 (SPGTPSMDAL…PPSPGPSCPT (117 aa)) are disordered. Residues 80 to 94 (DALSAQLYSSLSLDS) show a composition bias toward low complexity. A Nuclear export signal motif is present at residues 82–93 (LSAQLYSSLSLD). Residues 123–131 (PSSRPCANT) form a homomultimerization region. A compositionally biased stretch (polar residues) spans 143–164 (LGSTSQPCLFQTPDSGPKTCTP). Position 174 is a phosphothreonine; by host (threonine 174). The residue at position 177 (serine 177) is a Phosphoserine; by host. Over residues 178-189 (FPPPSPGPSCPT) the composition is skewed to pro residues.

It belongs to the deltaretrovirus Rex protein family. Homomultimer. Multimeric assembly is essential for activity and involves XPO1. Binds to human XPO1 and KPNB1. Interacts (via N-terminal nuclear localization signal) with human NPM1.

The protein localises to the host nucleus. It is found in the host nucleolus. Its subcellular location is the host cytoplasm. Functionally, rex escorts unspliced gag-pro-pol and singly spliced env mRNAs out of the nucleus of infected cells. These mRNAs carry a recognition sequence called Rex responsive element (RxRE or XRE) located at the 3' region of the long terminal repeat (LTR). This function is essential since most HTLV proteins are translated from unspliced or partially spliced pre-mRNAs that cannot exit the nucleus by the pathway used by fully processed cellular mRNAs. Rex itself is translated from a fully spliced mRNA that probably readily exits the nucleus. Rex's nuclear localization signal (NLS) binds directly to KPNB1/importin beta-1 without previous binding to KPNA1/importin alpha-1. KPNB1 binds to the GDP bound form of RAN (Ran-GDP) and targets Rex to the nucleus. In the nucleus, the conversion from Ran-GDP to Ran-GTP dissociates Rex from KPNB1 and allows Rex's binding to the RRE in viral pre-mRNAs. Rex multimerizes on the RRE via cooperative assembly. This multimerization is critical for its full biological activity, since it may shield the viral RNA from being spliced or down-regulated, and probably exposes Rex's nuclear export signal (NES) to the surface. Rex can then form a complex with XPO1/CRM1, RANBP3 and Ran-GTP, leading to nuclear export of the complex. Conversion from Ran-GTP to Ran-GDP mediates dissociation of the Rex/RRE/XPO1/RANBP3/RAN complex, so that Rex can return to the nucleus for a subsequent round of export. This Human T-cell leukemia virus 1 (strain Japan ATK-1 subtype A) (HTLV-1) protein is Protein Rex.